The sequence spans 225 residues: UPF0758 protein Shew185_0376 (225 aa).

The MPN domain occupies 102–224 (VLTNPDLTRD…IVSFAERGWI (123 aa)). Zn(2+)-binding residues include His-173, His-175, and Asp-186. The short motif at 173–186 (HNHPSGNAEPSQAD) is the JAMM motif element.

This sequence belongs to the UPF0758 family.

This chain is UPF0758 protein Shew185_0376, found in Shewanella baltica (strain OS185).